A 283-amino-acid polypeptide reads, in one-letter code: Pantothenate synthetase (283 aa).

31–38 provides a ligand contact to ATP; sequence MGALHDGH. Catalysis depends on His-38, which acts as the Proton donor. Residue Gln-62 participates in (R)-pantoate binding. Gln-62 provides a ligand contact to beta-alanine. An ATP-binding site is contributed by 148-151; the sequence is GKKD. Gln-154 is a binding site for (R)-pantoate. ATP is bound by residues Val-177 and 185 to 188; that span reads KSSR.

This sequence belongs to the pantothenate synthetase family. Homodimer.

The protein resides in the cytoplasm. The enzyme catalyses (R)-pantoate + beta-alanine + ATP = (R)-pantothenate + AMP + diphosphate + H(+). Its pathway is cofactor biosynthesis; (R)-pantothenate biosynthesis; (R)-pantothenate from (R)-pantoate and beta-alanine: step 1/1. In terms of biological role, catalyzes the condensation of pantoate with beta-alanine in an ATP-dependent reaction via a pantoyl-adenylate intermediate. This Staphylococcus aureus (strain Mu3 / ATCC 700698) protein is Pantothenate synthetase.